Here is a 487-residue protein sequence, read N- to C-terminus: Variant surface glycoprotein WRATAT B (487 aa).

The first 19 residues, 1–19, serve as a signal peptide directing secretion; that stretch reads MWIILALLTLAGSRVAHGA. 4 N-linked (GlcNAc...) asparagine glycosylation sites follow: Asn71, Asn84, Asn418, and Asn465. The disordered stretch occupies residues 443 to 468; sequence KPKAGTEAATTGPGERDAGATANTTG. The GPI-anchor amidated serine moiety is linked to residue Ser470. A propeptide spans 471–487 (removed in mature form); it reads NSFVIKTSPLLFAFLLF.

Its subcellular location is the cell membrane. VSG forms a coat on the surface of the parasite. The trypanosome evades the immune response of the host by expressing a series of antigenically distinct VSGs from an estimated 1000 VSG genes. The polypeptide is Variant surface glycoprotein WRATAT B (Trypanosoma brucei rhodesiense).